Here is a 101-residue protein sequence, read N- to C-terminus: Small ribosomal subunit protein bS18c (101 aa).

It belongs to the bacterial ribosomal protein bS18 family. As to quaternary structure, part of the 30S ribosomal subunit.

Its subcellular location is the plastid. The protein localises to the chloroplast. The chain is Small ribosomal subunit protein bS18c from Aethionema cordifolium (Lebanon stonecress).